The sequence spans 423 residues: ATP-citrate synthase alpha chain protein 1 (423 aa).

Residues asparagine 343, threonine 345, and arginine 376 each contribute to the citrate site.

The protein belongs to the succinate/malate CoA ligase beta subunit family. In terms of assembly, heterooctamer of 4 alpha and 4 beta chains. As to expression, expressed in trichomes, epidermal leaf cells, anther tapetal cells, stigma and in young vascular bundles of expanding leaves, cotyledons, roots, pedicel of flowers and siliques.

The protein localises to the cytoplasm. The protein resides in the cytosol. The enzyme catalyses oxaloacetate + acetyl-CoA + ADP + phosphate = citrate + ATP + CoA. ATP citrate-lyase is the primary enzyme responsible for the synthesis of cytosolic acetyl-CoA, used for the elongation of fatty acids and biosynthesis of isoprenoids, flavonoids and malonated derivatives. May supply substrate to the cytosolic acetyl-CoA carboxylase, which generates the malonyl-CoA used for the synthesis of a multitude of compounds, including very long chain fatty acids and flavonoids. Required for normal growth and development and elongation of C18 fatty acids to C20 to C24 fatty acids in seeds. In contrast to all known animal ACL enzymes having a homomeric structure, plant ACLs are composed of alpha and beta chains. This chain is ATP-citrate synthase alpha chain protein 1 (ACLA-1), found in Arabidopsis thaliana (Mouse-ear cress).